The following is a 494-amino-acid chain: Glutamate--tRNA ligase (494 aa).

The short motif at 9–19 is the 'HIGH' region element; sequence PSPTGDPHVGT. A 'KMSKS' region motif is present at residues 250-254; it reads KLSKR. Lys253 serves as a coordination point for ATP.

The protein belongs to the class-I aminoacyl-tRNA synthetase family. Glutamate--tRNA ligase type 1 subfamily. Monomer.

The protein resides in the cytoplasm. The enzyme catalyses tRNA(Glu) + L-glutamate + ATP = L-glutamyl-tRNA(Glu) + AMP + diphosphate. Functionally, catalyzes the attachment of glutamate to tRNA(Glu) in a two-step reaction: glutamate is first activated by ATP to form Glu-AMP and then transferred to the acceptor end of tRNA(Glu). The polypeptide is Glutamate--tRNA ligase (Alcanivorax borkumensis (strain ATCC 700651 / DSM 11573 / NCIMB 13689 / SK2)).